We begin with the raw amino-acid sequence, 475 residues long: Trifunctional enzyme subunit beta, mitochondrial (475 aa).

The transit peptide at methionine 1–histidine 34 directs the protein to the mitochondrion. Residue lysine 53 is modified to N6-succinyllysine. At lysine 73 the chain carries N6-acetyllysine; alternate. Lysine 73 bears the N6-succinyllysine; alternate mark. Catalysis depends on cysteine 139, which acts as the Acyl-thioester intermediate. The stretch at isoleucine 174 to asparagine 221 is an intramembrane region. Lysine 189 carries the N6-acetyllysine; alternate modification. At lysine 189 the chain carries N6-succinyllysine; alternate. 3 positions are modified to N6-succinyllysine: lysine 191, lysine 273, and lysine 292. The residue at position 294 (lysine 294) is an N6-acetyllysine; alternate. Lysine 294 is modified (N6-succinyllysine; alternate). Lysine 299 bears the N6-acetyllysine mark. Position 333 is an N6-acetyllysine; alternate (lysine 333). An N6-succinyllysine; alternate modification is found at lysine 333. Residues lysine 349 and lysine 362 each carry the N6-acetyllysine modification. Cysteine 459 (proton donor/acceptor) is an active-site residue.

This sequence belongs to the thiolase-like superfamily. Thiolase family. In terms of assembly, heterotetramer of 2 alpha/HADHA and 2 beta/HADHB subunits; forms the mitochondrial trifunctional enzyme. Also purified as higher order heterooligomers including a 4 alpha/HADHA and 4 beta/HADHB heterooligomer which physiological significance remains unclear. The mitochondrial trifunctional enzyme interacts with MTLN. Interacts with RSAD2/viperin. Acetylation of Lys-202 is observed in liver mitochondria from fasted mice but not from fed mice.

It localises to the mitochondrion. The protein resides in the mitochondrion inner membrane. The protein localises to the mitochondrion outer membrane. It is found in the endoplasmic reticulum. It catalyses the reaction an acyl-CoA + acetyl-CoA = a 3-oxoacyl-CoA + CoA. The catalysed reaction is butanoyl-CoA + acetyl-CoA = 3-oxohexanoyl-CoA + CoA. The enzyme catalyses hexanoyl-CoA + acetyl-CoA = 3-oxooctanoyl-CoA + CoA. It carries out the reaction octanoyl-CoA + acetyl-CoA = 3-oxodecanoyl-CoA + CoA. It catalyses the reaction decanoyl-CoA + acetyl-CoA = 3-oxododecanoyl-CoA + CoA. The catalysed reaction is dodecanoyl-CoA + acetyl-CoA = 3-oxotetradecanoyl-CoA + CoA. The enzyme catalyses tetradecanoyl-CoA + acetyl-CoA = 3-oxohexadecanoyl-CoA + CoA. Its pathway is lipid metabolism; fatty acid beta-oxidation. In terms of biological role, mitochondrial trifunctional enzyme catalyzes the last three of the four reactions of the mitochondrial beta-oxidation pathway. The mitochondrial beta-oxidation pathway is the major energy-producing process in tissues and is performed through four consecutive reactions breaking down fatty acids into acetyl-CoA. Among the enzymes involved in this pathway, the trifunctional enzyme exhibits specificity for long-chain fatty acids. Mitochondrial trifunctional enzyme is a heterotetrameric complex composed of two proteins, the trifunctional enzyme subunit alpha/HADHA carries the 2,3-enoyl-CoA hydratase and the 3-hydroxyacyl-CoA dehydrogenase activities, while the trifunctional enzyme subunit beta/HADHB described here bears the 3-ketoacyl-CoA thiolase activity. The sequence is that of Trifunctional enzyme subunit beta, mitochondrial (Hadhb) from Mus musculus (Mouse).